Here is a 437-residue protein sequence, read N- to C-terminus: Chromosomal replication initiator protein DnaA (437 aa).

The interval 1-82 is domain I, interacts with DnaA modulators; the sequence is MIFPIWKKCL…KIIINIEKKK (82 aa). Positions 82–101 are domain II; sequence KLEKKKCIYKKKNIQIYLHS. Residues 102–318 form a domain III, AAA+ region region; the sequence is EINKKYQFHN…GILKKIQILS (217 aa). Gly146, Gly148, Lys149, and Thr150 together coordinate ATP. A domain IV, binds dsDNA region spans residues 319 to 437; the sequence is ILNKEKITIN…FIYLFNQLNA (119 aa).

This sequence belongs to the DnaA family. As to quaternary structure, oligomerizes as a right-handed, spiral filament on DNA at oriC.

The protein resides in the cytoplasm. In terms of biological role, plays an essential role in the initiation and regulation of chromosomal replication. ATP-DnaA binds to the origin of replication (oriC) to initiate formation of the DNA replication initiation complex once per cell cycle. Binds the DnaA box (a 9 base pair repeat at the origin) and separates the double-stranded (ds)DNA. Forms a right-handed helical filament on oriC DNA; dsDNA binds to the exterior of the filament while single-stranded (ss)DNA is stabiized in the filament's interior. The ATP-DnaA-oriC complex binds and stabilizes one strand of the AT-rich DNA unwinding element (DUE), permitting loading of DNA polymerase. After initiation quickly degrades to an ADP-DnaA complex that is not apt for DNA replication. Binds acidic phospholipids. This is Chromosomal replication initiator protein DnaA from Buchnera aphidicola subsp. Cinara cedri (strain Cc).